Reading from the N-terminus, the 204-residue chain is Protein Nef (204 aa).

The disordered stretch occupies residues 1–33 (MGGKWSKRRAEGWQTIRERMRRAEPAEPAADGV). Residue Gly2 is the site of N-myristoyl glycine; by host attachment. Ser6 is subject to Phosphoserine; by host. The span at 8-25 (RRAEGWQTIRERMRRAEP) shows a compositional bias: basic and acidic residues. The tract at residues 63-66 (EEGE) is acidic; interacts with host PACS1 and PACS2; stabilizes the interaction of NEF/MHC-I with host AP1M1; necessary for MHC-I internalization. The tract at residues 70–79 (PVRPQVPLRP) is SH3-binding; interaction with Src family tyrosine kinases. Positions 73–76 (PQVP) match the PxxP; stabilizes the interaction of NEF/MHC-I with host AP1M1; necessary for MHC-I internalization motif. A mediates dimerization, Nef-PTE1 interaction region spans residues 109 to 125 (DILDLWVYHTQGFFPDW). Residues 149–179 (VEPDEGENNREDNSLLHPANQHGVEDSERQV) are binding to ATP6V1H. Positions 163 to 164 (LL) match the Dileucine internalization motif; necessary for CD4 internalization motif. The Diacidic; necessary for CD4 internalization signature appears at 173–174 (ED).

The protein belongs to the lentivirus primate group Nef protein family. In terms of assembly, monomer; cytosolic form. Homodimer; membrane bound form. Interacts with Nef associated p21-activated kinase (PAK2); this interaction activates PAK2. Associates with the Nef-MHC-I-AP1 complex; this complex is required for MHC-I internalization. Interacts (via C-terminus) with host PI3-kinase. Interacts with host PACS1; this interaction seems to be weak. Interacts with host PACS2. Interacts with host LCK and MAPK3; these interactions inhibit the kinase activity of the latter. Interacts with host ATP6V1H; this interaction may play a role in CD4 endocytosis. Associates with the CD4-Nef-AP2 complex; this complex is required for CD4 internalization. Interacts with host AP2 subunit alpha and AP2 subunit sigma2. Interacts with TCR-zeta chain; this interaction up-regulates the Fas ligand (FasL) surface expression. Interacts with host HCK, LYN, and SRC; these interactions activate the Src family kinases. Interacts with MAP3K5; this interaction inhibits the Fas and TNFR-mediated death signals. Interacts with beta-COP and PTE1. Interacts with human RACK1; this increases Nef phosphorylation by PKC. Interacts with TP53; this interaction decreases the half-life of TP53, protecting the infected cell against p53-mediated apoptosis. Post-translationally, the virion-associated Nef proteins are cleaved by the viral protease to release the soluble C-terminal core protein. Nef is probably cleaved concomitantly with viral structural proteins on maturation of virus particles. In terms of processing, myristoylated. Phosphorylated on serine residues, probably by host PKCdelta and theta.

It is found in the host cell membrane. The protein localises to the virion. The protein resides in the secreted. It localises to the host Golgi apparatus membrane. Factor of infectivity and pathogenicity, required for optimal virus replication. Alters numerous pathways of T-lymphocyte function and down-regulates immunity surface molecules in order to evade host defense and increase viral infectivity. Alters the functionality of other immunity cells, like dendritic cells, monocytes/macrophages and NK cells. Its function is as follows. In infected CD4(+) T-lymphocytes, down-regulates the surface MHC-I, mature MHC-II, CD4, CD28, CCR5 and CXCR4 molecules. Mediates internalization and degradation of host CD4 through the interaction of with the cytoplasmic tail of CD4, the recruitment of AP-2 (clathrin adapter protein complex 2), internalization through clathrin coated pits, and subsequent transport to endosomes and lysosomes for degradation. Diverts host MHC-I molecules to the trans-Golgi network-associated endosomal compartments by an endocytic pathway to finally target them for degradation. MHC-I down-regulation may involve AP-1 (clathrin adapter protein complex 1) or possibly Src family kinase-ZAP70/Syk-PI3K cascade recruited by PACS2. In consequence infected cells are masked for immune recognition by cytotoxic T-lymphocytes. Decreasing the number of immune receptors also prevents reinfection by more HIV particles (superinfection). Down-regulates host SERINC3 and SERINC5 thereby excluding these proteins from the viral particles. Virion infectivity is drastically higher when SERINC3 or SERINC5 are excluded from the viral envelope, because these host antiviral proteins impair the membrane fusion event necessary for subsequent virion penetration. Functionally, bypasses host T-cell signaling by inducing a transcriptional program nearly identical to that of anti-CD3 cell activation. Interaction with TCR-zeta chain up-regulates the Fas ligand (FasL). Increasing surface FasL molecules and decreasing surface MHC-I molecules on infected CD4(+) cells send attacking cytotoxic CD8+ T-lymphocytes into apoptosis. In terms of biological role, plays a role in optimizing the host cell environment for viral replication without causing cell death by apoptosis. Protects the infected cells from apoptosis in order to keep them alive until the next virus generation is ready to strike. Inhibits the Fas and TNFR-mediated death signals by blocking MAP3K5/ASK1. Decreases the half-life of TP53, protecting the infected cell against p53-mediated apoptosis. Inhibits the apoptotic signals regulated by the Bcl-2 family proteins through the formation of a Nef/PI3-kinase/PAK2 complex that leads to activation of PAK2 and induces phosphorylation of host BAD. Extracellular Nef protein targets CD4(+) T-lymphocytes for apoptosis by interacting with CXCR4 surface receptors. The sequence is that of Protein Nef from Human immunodeficiency virus type 1 group M subtype B (strain 89.6) (HIV-1).